Here is a 631-residue protein sequence, read N- to C-terminus: Polyadenylate-binding protein 3 (631 aa).

RRM domains follow at residues 11–89 (ASLY…WSQR), 99–175 (GNIF…QFKS), 191–268 (PNVY…RAQK), and 294–370 (VNLY…LAQR). Tyr-140 carries the post-translational modification Phosphotyrosine. At Ser-315 the chain carries Phosphoserine. N6,N6-dimethyllysine; alternate is present on Lys-361. Residue Lys-361 forms a Glycyl lysine isopeptide (Lys-Gly) (interchain with G-Cter in SUMO2); alternate linkage. Phosphotyrosine is present on Tyr-364. An omega-N-methylarginine mark is found at Arg-426, Arg-430, and Arg-449. Arg-501 carries the dimethylated arginine modification. Omega-N-methylarginine is present on Arg-513. The PABC domain maps to 537–614 (QETLTASRLA…AVAVLQAHQA (78 aa)).

This sequence belongs to the polyadenylate-binding protein type-1 family. As to expression, testis specific.

The protein resides in the cytoplasm. Functionally, binds the poly(A) tail of mRNA. May be involved in cytoplasmic regulatory processes of mRNA metabolism. Binds poly(A) with a slightly lower affinity as compared to PABPC1. This Homo sapiens (Human) protein is Polyadenylate-binding protein 3 (PABPC3).